Reading from the N-terminus, the 335-residue chain is Biotin synthase (335 aa).

Positions 43–269 constitute a Radical SAM core domain; the sequence is YFGKKVKLNM…INPTKEIRIA (227 aa). 3 residues coordinate [4Fe-4S] cluster: Cys61, Cys65, and Cys68. Residues Cys104, Cys137, Cys197, and Arg267 each coordinate [2Fe-2S] cluster.

The protein belongs to the radical SAM superfamily. Biotin synthase family. Homodimer. The cofactor is [4Fe-4S] cluster. It depends on [2Fe-2S] cluster as a cofactor.

The enzyme catalyses (4R,5S)-dethiobiotin + (sulfur carrier)-SH + 2 reduced [2Fe-2S]-[ferredoxin] + 2 S-adenosyl-L-methionine = (sulfur carrier)-H + biotin + 2 5'-deoxyadenosine + 2 L-methionine + 2 oxidized [2Fe-2S]-[ferredoxin]. It functions in the pathway cofactor biosynthesis; biotin biosynthesis; biotin from 7,8-diaminononanoate: step 2/2. Functionally, catalyzes the conversion of dethiobiotin (DTB) to biotin by the insertion of a sulfur atom into dethiobiotin via a radical-based mechanism. The chain is Biotin synthase from Staphylococcus aureus (strain USA300).